Here is a 139-residue protein sequence, read N- to C-terminus: Protein cornichon homolog 4 (139 aa).

A run of 3 helical transmembrane segments spans residues 5-25, 57-77, and 118-138; these read VFLFSLLDCCALIFLSVYFII, IVTVLMLVSLHWFIFLLNLPV, and LGFYLLCFFMYLYSMILALIN.

It belongs to the cornichon family. In terms of assembly, interacts with Sec23/24 complex components SEC24B and SEC24D. Interacts with CCR5. Interacts with ADRB2 in the early secretory pathway.

The protein resides in the membrane. It localises to the endoplasmic reticulum. Its subcellular location is the endoplasmic reticulum-Golgi intermediate compartment. Functionally, involved in G protein-coupled receptors (GPCRs) trafficking from the endoplasmic reticulum to the cell surface; it promotes the exit of GPCRs from the early secretory pathway, likely through interaction with the COPII machinery. This Mus musculus (Mouse) protein is Protein cornichon homolog 4 (Cnih4).